We begin with the raw amino-acid sequence, 523 residues long: Tyrosine ammonia-lyase (523 aa).

The Proton donor/acceptor role is filled by tyrosine 60. Substrate is bound at residue histidine 89. The segment at residues 149-151 (ASG) is a cross-link (5-imidazolinone (Ala-Gly)). Serine 150 is modified (2,3-didehydroalanine (Ser)). Substrate-binding positions include arginine 303 and 432 to 436 (NAANQ).

This sequence belongs to the PAL/histidase family. Homotetramer. Post-translationally, contains an active site 4-methylidene-imidazol-5-one (MIO), which is formed autocatalytically by cyclization and dehydration of residues Ala-Ser-Gly.

The enzyme catalyses L-tyrosine = (E)-4-coumarate + NH4(+). Functionally, catalyzes the non-oxidative deamination of L-tyrosine. Has very low phenylalanine ammonia-lyase activity (in vitro). This chain is Tyrosine ammonia-lyase (hutH), found in Cereibacter sphaeroides (strain ATCC 17023 / DSM 158 / JCM 6121 / CCUG 31486 / LMG 2827 / NBRC 12203 / NCIMB 8253 / ATH 2.4.1.) (Rhodobacter sphaeroides).